The chain runs to 268 residues: Tryptophan synthase alpha chain (268 aa).

Catalysis depends on proton acceptor residues Glu-49 and Asp-60.

Belongs to the TrpA family. Tetramer of two alpha and two beta chains.

It catalyses the reaction (1S,2R)-1-C-(indol-3-yl)glycerol 3-phosphate + L-serine = D-glyceraldehyde 3-phosphate + L-tryptophan + H2O. The protein operates within amino-acid biosynthesis; L-tryptophan biosynthesis; L-tryptophan from chorismate: step 5/5. Functionally, the alpha subunit is responsible for the aldol cleavage of indoleglycerol phosphate to indole and glyceraldehyde 3-phosphate. This chain is Tryptophan synthase alpha chain, found in Aeromonas hydrophila subsp. hydrophila (strain ATCC 7966 / DSM 30187 / BCRC 13018 / CCUG 14551 / JCM 1027 / KCTC 2358 / NCIMB 9240 / NCTC 8049).